We begin with the raw amino-acid sequence, 5141 residues long: MLLPALLFGMLWAPANGHWCEQIETVHVEEEVTPRREDLVPCTSLYHYSRLGWKLDLSWGGHVGLTRPPALGLCAIYKPPETRPATWNRTVRACCPGWGGIHCTEALAEASPKGHCFVTWHCQPLAGSANSSAGSLEECCAQPWGHSWWNSSSQMCLSCSGQHRPGNASSEGLLQPLAGAVGQLWSQRQRPSATCATWSGFHYQTFDGQHYHFLGQCTYLLAGAMDSTWAVHLRPSVHCPQPRQCWLVQVIMGPEEVLIQDGEVSVKGQPVPVGESQLLHGMSLQWQGDWLVLSGGLGVVVRLDRSSSIIISVDHEFWGRTQGLCGLYNGRPEDDFVEPGGGLAMLAATFGNSWRLPGYEPGCLDTVEVARGCEGLLEGTLTGLEAGKLQAQAQDLCHQLLEDPFSQCHGQVPPDEYHETCLFAYCVGATAGSGPEEQVKAVCATFANYAQACARQHIYVHWRKPGFCERLCPGGQLYSDCISSCPPSCSAVAQGEEGSCGKECVSGCECPTGLFWDGALCVPAAHCPCYYRRQRYAPGDTVKQQCNPCVCQDGRWHCAQAPCPAECAVGGDGHYCTFDGRSFSFRGNPGCQYSLVQDSVKGQLLVVLEHGACETGSCLHALSAFLGKTHIQLRYSGAVLVDGQDVDLPWIGAEGFNVSHASSTFLLLRWPGAWVLWGVADPAVYITLDPRHAYQVQGLCGTFTWKQQDDFLTPAGDIETSVTAFASKFQVSGDGRCPLVDNTPLSSCSTYSQRLAFAEAACAALHGHAFQECHGLVEREPFRLRCLESMCSCAPGRDCLCSVLSAYAHHCAQEGVLLQWRNETLCSVPCPGGQVYQECAPACGHYCGEPEDCKELGSCVAGCNCPPGLLWDLEGQCVPPSMCPCQLGGHRYAFNTTTTLKDCSHCICQERGLWNCIAHHCPRQWALCPQELIYAPGACLLTCDSLGANHSCLAGSTDGCVCPSGTVLLDKHCVSPDLCPCRHNGQWYPPNATIQEDCNICVCQNQRWHCTGQRCSGWCQASGAPHYVTFDGLVFTFPGACEYLLVREAGGRFSVSIQNLPCGASGLTCTKALAVRLDSTVVHMLRGQAVTVNGVSIKLPKVYTGPGLSLHHAGLFLLLTTRLGLTLLWDGGTRVLVQLSPHFHGRVTGLCGNFDGDVSNDLRSRQGVLEPTAELTAHSWRLNPLCPEPGDLPHPCSVNAHRVNWARAHCEVILQPIFAPCHTEVPPQQYYEWCVYDACGCDTGGDCECLCSAIATYADECARHRHHVRWRSQELCPLQCEGGQVYEPCGSTCPPTCHDHHPELRWHCQAITCVEGCFCPEGTLLHGGTCVELTDCPCEWQGSFFPPGAVLQKDCGNCTCQESQWHCNPSGAPCEEMEPGCAEGEALCRESGHCVPLEWLCDNQDDCGDGSDEEGCDTSVCGEGQMSCQSGRCLPLSLICDGQDDCGDGTDEQGCLCPQGFLACADGRCLPPALLCDGHPDCLDAADEESCLGWVSCTSGEVSCVDGPCIRTIQLCDGVWDCPDGADEGPVHCSSPSLPTPPAGIGQNPSTSSPDTSPSPVGSASPASPCSLSEFQCNSGECTPRGWRCDREEDCTDGSDELDCGGPCKLYQMPCAHGPHCLSPGQLCDGVAQCPDGSDEDPDVCEERSASGGPNGTAVPCPEFSCPNGTCIDFLLVCDGSPDCELADETEPSLDEQGCGTWGSWGPWEPCSQTCGPGIQSRNRNCSISSLHVLQNCPGLQHQSQSCFTEACPVDGEWSSWSLWSPCSEPCGGTMTRHRQCRPPQNGGQDCALLPGSTHSTHQTSPCPQEGCLNVTCFGELVFRPCAPCPLTCDDISGEAVCSPDRPCSSPGCWCPEGKVLGTEGRCVRPRQCPCLVDGIRYWPGQRIKMDCQLCFCQDGQPHRCRPNPECAVDCGWSSWSPWAECLGPCSSQSLQWSFRSPNNPRLSGHGRQCRGIHRKARRCQTEPCEGCEQWGLTYHVGERWRGGPCTVCECLHRSITRCSPYCPIGSCPQSWVLVEGMGESCCHCALPGKNQTMIPVTTPAPVPTPSPQIGASLVTYVLPPMSDACYSPLGLAGLPTWAPSQPLEHSTRAAPVEAPTAGPGPREDAYAEWHTQPLYLQLDLLWPRNLTGIMVQRAGSSAAYISNLSLQFSSDGLQWHSVLNSLSSTLPPPKPSPESSNHMVPEVWTFDQMVQARYIRVWPHGSHLRDNNQQDIFLWVELLGCKPVPPLAPLCPGTRHRCANGDCALKGGPCDGAVDCEDGSDEEGCGPLRASTASRVHSTARTPALSPTQPGKFPFHPREGLADMEHQQPKQESPMPSAGVSPSASEGLLPVSGQSMQTLTTTSTFPPGLKSLHPGMAAVTVHSPHSVMPGTPVGQSVSPRPFPLMRCGPGQVPCDVLGCVEQEQLCDGREDCLDGSDEQHCASPEPFTVPTTALPGLPASRALCSPSQLSCGSGECLPLEHRCDLQVNCQDGSDEDDCVDCVLAPWSGWSDCSRSCGLGLIFQHRELLRPPLPGGSCLLDQLRSQPCFVQACPVAGAWAKWGPWEPCSVSCGGGHQSRQRSCVDPPPKNGGAPCPGPSHEKVLCNLQLCPGDTDCEPGRVHVNAELCQKGLLPPCPPSCLDPEANRSCSGHCVEGCRCPPGLFLQDSHCLPLSECPCLVGQKLMQPGLAFLLDNCSQCICESGILLCKPAACSQSCGWSAWSPWTACDHSCGSGVRARFRSPTNPPAAFGGSPCEGDRQELQACYTDCGTDIPGWTPWTSWSSCSQSCLVPGGDPGRRQRSRLCPSSRDTFCPGEATQEEPCSPSLCPVPSAWGLWASWSACSASCNGGIQTRGRSCSGSAPGNPVCLGPHTQTRDCNVHPCTAQCPGNMVFRSAEKCLEEGGPCPQLCLAQDPGVECTGSCAPGCSCPPGLFLHNASCLPRSQCPCQLHGQLYAPGAVARLDCNNCTCSSGEMVCTSERCPVACGWSPWTPWSPCSQSCNVGIRRRFRAGTAPPAAFGGAECRGPNLDAEFCTLRPCQGPGAAWSSWTPCSVPCGGGYRNRTQGSGRHSPVEFSTCSLQPCAGPVPGVCPKDQQWLDCAQGPASCAHLSTPREANQTCHPGCYCLSGMLLLNNVCVPAQDCPCAHRGRLHSPGSAVILPCENCSCVSGLITNCSSWPCEEGQPAWSSWTPWSVCSASCSPARRHRRRFCVRPSTTAPFSLDLPTTVAAPTMLCPGPEAEEEPCLLPGCNQAGVWGPWSPWSGCSRSCGGGLRSRTRACDKPPPQGLGDFCEGPQAQGEACQAQPCPVANCSTIEGAEYSPCGPPCPRSCDDLVHCMWHCQPGCYCPPGKVLSADGAICVQPHHCSCLDLLTGKRHHPGSQLMRPDGCNHCTCMEGRLNCTDLPCQVSGDWCPWSEWTACSQPCRGQTRTRSRACVCPAPQHGGAPCPEEAGETGVQHQMEACPNPTACPVDGAWSPWGSWSPCDACLGQSYRSRMCSHPPPSDGGTPCLGGHQQSRPCRNSSTPCTDCGGGQDLLPCGQPCPHSCQDLSLGSTCQPGSSGCQSGCGCPPGQLSQDGLCVFPADCHCHFQPKAMGIPENQSRSVGSALSSWESLEPGEVVTGPCDNCTCVAGVLQCHEVPSCPGPGIWSSWGPWEKCSVPCGGGEQLRSRQCARPPCPGLAQQSRTCHIHVCRETGCPAGRLYRECQPSEGCPFSCAHVTGQVACFSESCEEGCHCPEGTFQHHSACVQECPCVLTVSLLQELGVASTALRSYPVLLGDEGQPLGPGDELDPGQMLQTVCGNCSCVHGKLSCSMEECSRVRGYFGPWGMWSLCSHSCGGLGTRTRTRQCVLPTLAPAGLSCRGPLQDLEYCFSPECPGTAGSTVEPVTGLAGGWGPWSPWSPCSHSCTDLTHPAWRSRTRLCLANCTVGDSSQERPCNLPSCTTLPLCPGPGCGSENCFWTSWAPWEPCSRSCGVGQQRRLRAYHPPGPGGHWCPDILTAYQERRFCNLRACPVPGGWSHWSPWSWCDRSCGGGRSLRSRSCSSPPPKNGGASCVGERHHVRSCNPMPCEKDCPAGMEMVSCANRCPYSCSDLQEAVMCQEDQACQLGCRCSEGFLEQDGGCVPVGHCECTDAQGRSWAPGSQHQDACNNCSCQAGQLSCTAQPCPPPAHCAWSHWSAWSACSHSCGPHGQQSRFRSSTSGSWALECQKEQSQSQPCPEDPCPPLCLHEAHLHVLGDNWLHGECQQCSCTPEGVICKDTDCAVPGGWTLWSSWSYCSVSCGGGSQVRTRSCMVSAPQHGSPSCQGPDTQTQHCGQQLCLQLLEICSWGPWGPCSRSCGTGLASRSGSCPCLLTKEDSECNDTFSGLDTQACYPGPCQEDCMWSDWSSWTRCSCKILVQQRYRHQVPAPGQAGEGTLCTGLDGHFRPCAIGNCSEDSCLPPFEFQSCGSPCAGLCATHLSHQLCQDLPPCQPGCYCPMGLLEQDGGCILPEQCNCWHTSGEGARVTLAPGHRLQLGCKECVCQSGELQCSSQGCEGLLPLTGWSEWSPCGPCLPQSALAPDSRTALEVHWPLNTSVTLLASEQYRHRLCLDPETGRPWAGDPALCTVPLSQQRLCSDPGACHDTCQWGPWGPWSPCQVPCSGGFKLRWREASDNSVGECRGPWAQTESCNMGSCPGESCETRDTVFTLDCANQCPRSCADLWEGVQCLQGPCSPGCRCPPGQLVQDGHCVPISSCRCGLPSANASWELAPTQVVQLDCHNCTCINGTLMCPYPECPVLGPWSPWSECSAVCGGGTMVRYRSCEEHPDSAPCQALDMEQRVECNLQTCPECPPGQVLSTCATLCPSFCSHLWPGTICVREPCQLGCGCPGGQLLHSGTCIPPEACPCTRLSLPWGLTLPLEEQAQELPSGTVLTWNCTHCTCQGGVFTCSHTDCQECPPGEILQLGELRPCEKTCLEMNKTQAWSNCTEAQVPGCVCQLGHFRSHTGLCVPEDHCECWHHGSPHLPGSEWQEACESCRCLHGKSVCTQHCPELSCAQGEVVVQEPGSCCPICQQDTLEEEPVSCRHLTELRNLTKGPCHLDQVEVSYCSGHCRSSTNVMTEEPYLQSQCDCCSYRLDPDSPVRILNLLCPDGRTEPVLLPVIHNCHCSACQGGEFSKH.

The N-terminal stretch at 1-17 (MLLPALLFGMLWAPANG) is a signal peptide. Residues 18-102 (HWCEQIETVH…ACCPGWGGIH (85 aa)) enclose the EMI domain. N-linked (GlcNAc...) asparagine glycans are attached at residues asparagine 88, asparagine 130, asparagine 150, and asparagine 167. Residues 193–364 (ATCATWSGFH…RLPGYEPGCL (172 aa)) enclose the VWFD 1 domain. Intrachain disulfides connect cysteine 195–cysteine 325, cysteine 217–cysteine 363, and cysteine 239–cysteine 245. Positions 472–527 (CPGGQLYSDCISSCPPSCSAVAQGEEGSCGKECVSGCECPTGLFWDGALCVPAAHC) constitute a TIL 1 domain. The VWFD 2 domain maps to 565–738 (AECAVGGDGH…FQVSGDGRCP (174 aa)). Disulfide bonds link cysteine 567–cysteine 700 and cysteine 591–cysteine 737. N-linked (GlcNAc...) asparagine glycans are attached at residues asparagine 657 and asparagine 822. The TIL 2 domain maps to 830 to 883 (CPGGQVYQECAPACGHYCGEPEDCKELGSCVAGCNCPPGLLWDLEGQCVPPSMC). Residues asparagine 895, asparagine 949, and asparagine 991 are each glycosylated (N-linked (GlcNAc...) asparagine). In terms of domain architecture, VWFD 3 spans 1017-1187 (GWCQASGAPH…HSWRLNPLCP (171 aa)). 3 disulfide bridges follow: cysteine 1019–cysteine 1151, cysteine 1041–cysteine 1186, and cysteine 1062–cysteine 1069. The 57-residue stretch at 1280-1336 (CEGGQVYEPCGSTCPPTCHDHHPELRWHCQAITCVEGCFCPEGTLLHGGTCVELTDC) folds into the TIL 3 domain. The N-linked (GlcNAc...) asparagine glycan is linked to asparagine 1357. 4 consecutive LDL-receptor class A domains span residues 1380 to 1417 (GCAE…EGCD), 1420 to 1456 (VCGE…QGCL), 1456 to 1492 (LCPQ…ESCL), and 1496 to 1534 (SCTS…VHCS). 12 disulfide bridges follow: cysteine 1381–cysteine 1394, cysteine 1388–cysteine 1407, cysteine 1401–cysteine 1416, cysteine 1421–cysteine 1433, cysteine 1428–cysteine 1446, cysteine 1440–cysteine 1455, cysteine 1457–cysteine 1469, cysteine 1464–cysteine 1482, cysteine 1476–cysteine 1491, cysteine 1497–cysteine 1509, cysteine 1504–cysteine 1522, and cysteine 1516–cysteine 1533. A disordered region spans residues 1533 to 1567 (CSSPSLPTPPAGIGQNPSTSSPDTSPSPVGSASPA). The segment covering 1549–1567 (PSTSSPDTSPSPVGSASPA) has biased composition (low complexity). LDL-receptor class A domains are found at residues 1569–1605 (PCSL…LDCG) and 1607–1646 (PCKL…DVCE). Intrachain disulfides connect cysteine 1570–cysteine 1582, cysteine 1577–cysteine 1595, cysteine 1589–cysteine 1604, cysteine 1608–cysteine 1621, cysteine 1615–cysteine 1634, and cysteine 1628–cysteine 1645. Residues asparagine 1655 and asparagine 1668 are each glycosylated (N-linked (GlcNAc...) asparagine). Positions 1660 to 1700 (PCPEFSCPNGTCIDFLLVCDGSPDCELADETEPSLDEQGCG) constitute an LDL-receptor class A 7 domain. 9 disulfides stabilise this stretch: cysteine 1661/cysteine 1671, cysteine 1666/cysteine 1684, cysteine 1678/cysteine 1699, cysteine 1711/cysteine 1747, cysteine 1715/cysteine 1752, cysteine 1726/cysteine 1737, cysteine 1767/cysteine 1964, cysteine 1771/cysteine 1969, and cysteine 1781/cysteine 1791. TSP type-1 domains lie at 1699–1753 (CGTW…EACP) and 1755–1970 (DGEW…EPCE). An N-linked (GlcNAc...) asparagine glycan is attached at asparagine 1725. Asparagine 1814 carries an N-linked (GlcNAc...) asparagine glycan. EGF-like domains lie at 1829 to 1868 (CPLT…GRCV) and 1869 to 1895 (RPRQ…CQLC). In terms of domain architecture, VWFC 1 spans 1970-2030 (EGCEQWGLTY…GMGESCCHCA (61 aa)). Asparagine 2035 carries an N-linked (GlcNAc...) asparagine glycan. Intrachain disulfides connect cysteine 2070–cysteine 2226, cysteine 2236–cysteine 2248, cysteine 2243–cysteine 2261, and cysteine 2255–cysteine 2270. The 157-residue stretch at 2070-2226 (CYSPLGLAGL…IFLWVELLGC (157 aa)) folds into the F5/8 type C domain. Residues 2087–2109 (PLEHSTRAAPVEAPTAGPGPRED) are disordered. Residues asparagine 2130 and asparagine 2148 are each glycosylated (N-linked (GlcNAc...) asparagine). Residues 2235-2271 (LCPGTRHRCANGDCALKGGPCDGAVDCEDGSDEEGCG) enclose the LDL-receptor class A 8 domain. Positions 2262–2335 (EDGSDEEGCG…SPSASEGLLP (74 aa)) are disordered. Residues 2276–2294 (STASRVHSTARTPALSPTQ) show a composition bias toward polar residues. Over residues 2301 to 2314 (HPREGLADMEHQQP) the composition is skewed to basic and acidic residues. 2 LDL-receptor class A domains span residues 2391–2427 (RCGP…QHCA) and 2448–2484 (LCSP…DDCV). Cystine bridges form between cysteine 2392/cysteine 2404, cysteine 2399/cysteine 2417, cysteine 2411/cysteine 2426, cysteine 2449/cysteine 2461, cysteine 2456/cysteine 2474, cysteine 2468/cysteine 2483, cysteine 2486/cysteine 2522, cysteine 2497/cysteine 2501, cysteine 2532/cysteine 2537, cysteine 2552/cysteine 2589, cysteine 2556/cysteine 2594, and cysteine 2567/cysteine 2579. 2 TSP type-1 domains span residues 2485–2538 (DCVL…QACP) and 2540–2595 (AGAW…QLCP). A TIL 4 domain is found at 2618-2660 (PPCPPSCLDPEANRSCSGHCVEGCRCPPGLFLQDSHCLPLSEC). N-linked (GlcNAc...) asparagine glycans are attached at residues asparagine 2630 and asparagine 2679. TSP type-1 domains lie at 2700 to 2754 (SCGW…TDCG), 2758 to 2813 (PGWT…SLCP), and 2815 to 2868 (PSAW…HPCT). 9 disulfide bridges follow: cysteine 2701–cysteine 2739, cysteine 2712–cysteine 2716, cysteine 2749–cysteine 2753, cysteine 2769–cysteine 2807, cysteine 2773–cysteine 2812, cysteine 2789–cysteine 2797, cysteine 2827–cysteine 2862, cysteine 2831–cysteine 2867, and cysteine 2842–cysteine 2852. Asparagine 2921 and asparagine 2951 each carry an N-linked (GlcNAc...) asparagine glycan. 2 consecutive TSP type-1 domains span residues 2969–3024 (ACGW…RPCQ) and 3025–3068 (GPGA…QPCA). Disulfide bonds link cysteine 2970-cysteine 3008, cysteine 2981-cysteine 2985, and cysteine 3018-cysteine 3023. Residues asparagine 3046, asparagine 3101, asparagine 3148, and asparagine 3158 are each glycosylated (N-linked (GlcNAc...) asparagine). The 53-residue stretch at 3075-3127 (CPKDQQWLDCAQGPASCAHLSTPREANQTCHPGCYCLSGMLLLNNVCVPAQDC) folds into the TIL 5 domain. TSP type-1 domains follow at residues 3168-3235 (QPAW…PGCN) and 3237-3292 (AGVW…QPCP). Intrachain disulfides connect cysteine 3180-cysteine 3229, cysteine 3184-cysteine 3234, cysteine 3195-cysteine 3219, cysteine 3249-cysteine 3286, cysteine 3253-cysteine 3291, and cysteine 3264-cysteine 3276. An N-linked (GlcNAc...) asparagine glycan is attached at asparagine 3295. The region spanning 3300 to 3350 (EGAEYSPCGPPCPRSCDDLVHCMWHCQPGCYCPPGKVLSADGAICVQPHHC) is the TIL 6 domain. A glycan (N-linked (GlcNAc...) asparagine) is linked at asparagine 3384. TSP type-1 domains follow at residues 3393–3455 (SGDW…TACP) and 3457–3512 (DGAW…TPCT). Disulfide bonds link cysteine 3405–cysteine 3448, cysteine 3409–cysteine 3454, cysteine 3420–cysteine 3432, cysteine 3469–cysteine 3504, cysteine 3472–cysteine 3511, and cysteine 3482–cysteine 3494. N-linked (GlcNAc...) asparagine glycosylation occurs at asparagine 3506. The region spanning 3514–3570 (CGGGQDLLPCGQPCPHSCQDLSLGSTCQPGSSGCQSGCGCPPGQLSQDGLCVFPADC) is the TIL 7 domain. Residues asparagine 3584 and asparagine 3611 are each glycosylated (N-linked (GlcNAc...) asparagine). Positions 3630–3678 (PGIWSSWGPWEKCSVPCGGGEQLRSRQCARPPCPGLAQQSRTCHIHVCR) constitute a TSP type-1 14 domain. Cystine bridges form between cysteine 3642-cysteine 3672, cysteine 3646-cysteine 3677, and cysteine 3657-cysteine 3662. Asparagine 3787 carries N-linked (GlcNAc...) asparagine glycosylation. 4 TSP type-1 domains span residues 3806-3862 (RGYF…PECP), 3876-3928 (AGGW…PSCT), 3942-3998 (NCFW…RACP), and 4000-4055 (PGGW…MPCE). Intrachain disulfides connect cysteine 3818–cysteine 3856, cysteine 3822–cysteine 3861, and cysteine 3834–cysteine 3846. A glycan (N-linked (GlcNAc...) asparagine) is linked at asparagine 3910. Intrachain disulfides connect cysteine 3943–cysteine 3979, cysteine 3954–cysteine 3958, cysteine 3992–cysteine 3997, cysteine 4012–cysteine 4049, cysteine 4016–cysteine 4054, and cysteine 4027–cysteine 4039. The TIL 8 domain occupies 4058–4113 (CPAGMEMVSCANRCPYSCSDLQEAVMCQEDQACQLGCRCSEGFLEQDGGCVPVGHC). N-linked (GlcNAc...) asparagine glycosylation is present at asparagine 4135. 4 consecutive TSP type-1 domains span residues 4155-4208 (HCAW…DPCP), 4249-4304 (PGGW…QLCL), 4306-4362 (LLEI…GPCQ), and 4364-4418 (DCMW…GNCS). 6 disulfide bridges follow: cysteine 4156-cysteine 4192, cysteine 4167-cysteine 4171, cysteine 4202-cysteine 4207, cysteine 4261-cysteine 4298, cysteine 4265-cysteine 4303, and cysteine 4276-cysteine 4288. N-linked (GlcNAc...) asparagine glycosylation is present at asparagine 4345. 3 disulfide bridges follow: cysteine 4365-cysteine 4402, cysteine 4376-cysteine 4378, and cysteine 4412-cysteine 4417. Asparagine 4416 carries N-linked (GlcNAc...) asparagine glycosylation. A TIL 9 domain is found at 4422–4477 (CLPPFEFQSCGSPCAGLCATHLSHQLCQDLPPCQPGCYCPMGLLEQDGGCILPEQC). N-linked (GlcNAc...) asparagine glycosylation is present at asparagine 4557. The TSP type-1 23 domain occupies 4608–4659 (TCQWGPWGPWSPCQVPCSGGFKLRWREASDNSVGECRGPWAQTESCNMGSCP). Intrachain disulfides connect cysteine 4609-cysteine 4643, cysteine 4620-cysteine 4624, and cysteine 4653-cysteine 4658. The region spanning 4673 to 4719 (DCANQCPRSCADLWEGVQCLQGPCSPGCRCPPGQLVQDGHCVPISSC) is the TIL 10 domain. N-linked (GlcNAc...) asparagine glycosylation is found at asparagine 4727, asparagine 4744, and asparagine 4749. The 54-residue stretch at 4759–4812 (CPVLGPWSPWSECSAVCGGGTMVRYRSCEEHPDSAPCQALDMEQRVECNLQTCP) folds into the TSP type-1 24 domain. Disulfide bonds link cysteine 4771-cysteine 4806, cysteine 4775-cysteine 4811, and cysteine 4786-cysteine 4795. In terms of domain architecture, TIL 11 spans 4814 to 4868 (CPPGQVLSTCATLCPSFCSHLWPGTICVREPCQLGCGCPGGQLLHSGTCIPPEAC). Asparagine 4899, asparagine 4942, and asparagine 4949 each carry an N-linked (GlcNAc...) asparagine glycan. One can recognise a TIL 12 domain in the interval 4920 to 4978 (CPPGEILQLGELRPCEKTCLEMNKTQAWSNCTEAQVPGCVCQLGHFRSHTGLCVPEDHC). The 59-residue stretch at 4978–5036 (CECWHHGSPHLPGSEWQEACESCRCLHGKSVCTQHCPELSCAQGEVVVQEPGSCCPICQ) folds into the VWFC 2 domain. 4 cysteine pairs are disulfide-bonded: cysteine 5047/cysteine 5095, cysteine 5061/cysteine 5112, cysteine 5071/cysteine 5128, and cysteine 5075/cysteine 5130. The region spanning 5047–5134 (CRHLTELRNL…IHNCHCSACQ (88 aa)) is the CTCK domain. The N-linked (GlcNAc...) asparagine glycan is linked to asparagine 5055.

It belongs to the thrombospondin family.

Its subcellular location is the secreted. It localises to the extracellular space. Involved in the modulation of neuronal aggregation. May be involved in developmental events during the formation of the central nervous system. The sequence is that of SCO-spondin from Rattus norvegicus (Rat).